A 94-amino-acid chain; its full sequence is Cell division topological specificity factor (94 aa).

It belongs to the MinE family.

In terms of biological role, prevents the cell division inhibition by proteins MinC and MinD at internal division sites while permitting inhibition at polar sites. This ensures cell division at the proper site by restricting the formation of a division septum at the midpoint of the long axis of the cell. This chain is Cell division topological specificity factor, found in Synechococcus sp. (strain CC9311).